We begin with the raw amino-acid sequence, 460 residues long: NADH-ubiquinone oxidoreductase chain 4 (460 aa).

13 helical membrane-spanning segments follow: residues 22-42 (WLWSSITTHSLLISLLSLSWF), 59-79 (IDPLSAPLLILTCWLLPLMIL), 94-113 (RIYISLLISLQVFLIMAFSA), 117-139 (ILFYIMFEATLIPTLIIITRWGN), 148-168 (TYFLFYTLIGSLPLLIALLFM), 195-215 (FWWTACLIAFLVKMPLYGVHL), 231-251 (ILAAVLLKLGGYGMMRIIIML), 258-278 (MAYPFIILAIWGIVMTSSICL), 286-306 (MIAYSSVSHMGLVAGAILIQT), 310-330 (FAGAITLMIAHGLVSSALFCL), 343-362 (LLLARGVQVILPLMATWWLL), 394-414 (ILLTGIGVLITASYSLYMFLM), and 436-456 (LLLTLHVLPVLLLILKPELIW).

The protein belongs to the complex I subunit 4 family.

It localises to the mitochondrion membrane. The catalysed reaction is a ubiquinone + NADH + 5 H(+)(in) = a ubiquinol + NAD(+) + 4 H(+)(out). Functionally, core subunit of the mitochondrial membrane respiratory chain NADH dehydrogenase (Complex I) that is believed to belong to the minimal assembly required for catalysis. Complex I functions in the transfer of electrons from NADH to the respiratory chain. The immediate electron acceptor for the enzyme is believed to be ubiquinone. This chain is NADH-ubiquinone oxidoreductase chain 4 (MTND4), found in Scyliorhinus canicula (Small-spotted catshark).